A 309-amino-acid polypeptide reads, in one-letter code: Taste receptor type 2 member 45 (309 aa).

Residue methionine 1 is a topological domain, extracellular. A helical transmembrane segment spans residues 2–22; it reads ITFLPIIFSILVVVTFVIGNF. At 23 to 55 the chain is on the cytoplasmic side; the sequence is ANGFIALVNSTEWVKRQKISFADQIVTALAVSR. A helical transmembrane segment spans residues 56-76; the sequence is VGLLWVLLLNWYSTVLNPAFY. Over 77 to 98 the chain is Extracellular; that stretch reads SVELRTTAYNIWAVTGHFSNWL. A helical membrane pass occupies residues 99 to 119; the sequence is ATSLSIFYLLKIANFSNLIFL. Over 120-126 the chain is Cytoplasmic; it reads HLKRRVK. Residues 127–147 traverse the membrane as a helical segment; it reads SVILVMLLGPLLFLACHLFVV. Residues 148–178 are Extracellular-facing; the sequence is NMNQIVWTKEYEGNMTWKIKLRRAMYLSDTT. Asparagine 161 carries an N-linked (GlcNAc...) asparagine glycan. The helical transmembrane segment at 179-199 threads the bilayer; sequence VTMLANLVPFTVTLISFLLLV. The Cytoplasmic segment spans residues 200–229; the sequence is CSLCEHLKKMQLHGKGSQDPSTKVHIKALQ. A helical transmembrane segment spans residues 230–250; the sequence is TVISFLLLCAIYFVSVIISVW. Over 251–259 the chain is Extracellular; sequence SFKNLENKP. Residues 260–280 form a helical membrane-spanning segment; that stretch reads VFMFCQAIGFSCSSAHPFILI. At 281 to 309 the chain is on the cytoplasmic side; it reads WGNKKLKQPFLSVLWQMRYWVKGEKPSSS.

Belongs to the G-protein coupled receptor T2R family.

It localises to the membrane. Functionally, receptor that may play a role in the perception of bitterness and is gustducin-linked. May play a role in sensing the chemical composition of the gastrointestinal content. The activity of this receptor may stimulate alpha gustducin, mediate PLC-beta-2 activation and lead to the gating of TRPM5. This Pan paniscus (Pygmy chimpanzee) protein is Taste receptor type 2 member 45 (TAS2R45).